A 488-amino-acid polypeptide reads, in one-letter code: Cobyric acid synthase (488 aa).

The GATase cobBQ-type domain occupies L247–A440. C328 functions as the Nucleophile in the catalytic mechanism. The active site involves H432.

This sequence belongs to the CobB/CobQ family. CobQ subfamily.

The protein operates within cofactor biosynthesis; adenosylcobalamin biosynthesis. In terms of biological role, catalyzes amidations at positions B, D, E, and G on adenosylcobyrinic A,C-diamide. NH(2) groups are provided by glutamine, and one molecule of ATP is hydrogenolyzed for each amidation. The chain is Cobyric acid synthase from Cupriavidus pinatubonensis (strain JMP 134 / LMG 1197) (Cupriavidus necator (strain JMP 134)).